A 360-amino-acid chain; its full sequence is A-type ATP synthase subunit C (360 aa).

Residues 1–25 (MRLLEKLWGQKPSRKSDKKKNGTSN) form a disordered region.

It belongs to the V-ATPase V0D/AC39 subunit family. In terms of assembly, has multiple subunits with at least A(3), B(3), C, D, E, F, H, I and proteolipid K(x).

The protein resides in the cell membrane. Its function is as follows. Component of the A-type ATP synthase that produces ATP from ADP in the presence of a proton gradient across the membrane. The chain is A-type ATP synthase subunit C from Methanosarcina barkeri (strain Fusaro / DSM 804).